The sequence spans 483 residues: Aspartyl/glutamyl-tRNA(Asn/Gln) amidotransferase subunit B (483 aa).

Belongs to the GatB/GatE family. GatB subfamily. As to quaternary structure, heterotrimer of A, B and C subunits.

It carries out the reaction L-glutamyl-tRNA(Gln) + L-glutamine + ATP + H2O = L-glutaminyl-tRNA(Gln) + L-glutamate + ADP + phosphate + H(+). The catalysed reaction is L-aspartyl-tRNA(Asn) + L-glutamine + ATP + H2O = L-asparaginyl-tRNA(Asn) + L-glutamate + ADP + phosphate + 2 H(+). In terms of biological role, allows the formation of correctly charged Asn-tRNA(Asn) or Gln-tRNA(Gln) through the transamidation of misacylated Asp-tRNA(Asn) or Glu-tRNA(Gln) in organisms which lack either or both of asparaginyl-tRNA or glutaminyl-tRNA synthetases. The reaction takes place in the presence of glutamine and ATP through an activated phospho-Asp-tRNA(Asn) or phospho-Glu-tRNA(Gln). This Rickettsia canadensis (strain McKiel) protein is Aspartyl/glutamyl-tRNA(Asn/Gln) amidotransferase subunit B.